The sequence spans 125 residues: uncharacterized protein (125 aa).

3 helical membrane passes run 20 to 42 (RNGG…LTIL), 57 to 76 (LMNA…GVVV), and 81 to 103 (YLFV…YMAS).

The protein localises to the cell membrane. This is an uncharacterized protein from Archaeoglobus fulgidus (strain ATCC 49558 / DSM 4304 / JCM 9628 / NBRC 100126 / VC-16).